Consider the following 98-residue polypeptide: NADH-ubiquinone oxidoreductase chain 4L (98 aa).

3 helical membrane-spanning segments follow: residues 1–21, 26–46, and 61–81; these read MSPIFINITLAFTISLLGMLV, LMASLLCLEGMMMSLFITIAL, and ITLLVFAACETAVGLALLVSI.

It belongs to the complex I subunit 4L family. In terms of assembly, core subunit of respiratory chain NADH dehydrogenase (Complex I) which is composed of 45 different subunits.

The protein resides in the mitochondrion inner membrane. It catalyses the reaction a ubiquinone + NADH + 5 H(+)(in) = a ubiquinol + NAD(+) + 4 H(+)(out). Core subunit of the mitochondrial membrane respiratory chain NADH dehydrogenase (Complex I) which catalyzes electron transfer from NADH through the respiratory chain, using ubiquinone as an electron acceptor. Part of the enzyme membrane arm which is embedded in the lipid bilayer and involved in proton translocation. The protein is NADH-ubiquinone oxidoreductase chain 4L (MT-ND4L) of Chlorocebus aethiops (Green monkey).